The chain runs to 301 residues: Dihydroorotate dehydrogenase B (NAD(+)), catalytic subunit (301 aa).

FMN contacts are provided by residues Ser-21 and Lys-45–Ser-46. Residues Lys-45, Asn-69–Leu-73, and Asn-125 each bind substrate. Asn-125 provides a ligand contact to FMN. Cys-128 (nucleophile) is an active-site residue. Positions 163 and 187 each coordinate FMN. Asn-188–Thr-189 is a substrate binding site. FMN is bound by residues Gly-213, Gly-239–Gly-240, and Gly-261–Thr-262.

This sequence belongs to the dihydroorotate dehydrogenase family. Type 1 subfamily. Heterotetramer of 2 PyrK and 2 PyrD type B subunits. Requires FMN as cofactor.

The protein resides in the cytoplasm. It catalyses the reaction (S)-dihydroorotate + NAD(+) = orotate + NADH + H(+). Its pathway is pyrimidine metabolism; UMP biosynthesis via de novo pathway; orotate from (S)-dihydroorotate (NAD(+) route): step 1/1. Its function is as follows. Catalyzes the conversion of dihydroorotate to orotate with NAD(+) as electron acceptor. This is Dihydroorotate dehydrogenase B (NAD(+)), catalytic subunit (pyrD) from Thermoplasma volcanium (strain ATCC 51530 / DSM 4299 / JCM 9571 / NBRC 15438 / GSS1).